A 283-amino-acid chain; its full sequence is Undecaprenyl-diphosphatase (283 aa).

7 helical membrane passes run 1–21, 40–60, 85–105, 117–137, 196–216, 232–252, and 258–278; these read MDIIQAIVLGIIQGLTEFLPI, GAAFTAIIQIGTLAAVLIYFY, SRMGWMISAGTIPIVVLGLLF, YIISGSLILLALVLMYAEYLV, FSFLLSLPAVFAAGVYQLLKV, VATVVSGVIGYASIAFLLDYL, and YLFIIYRILLGVFLLAMLSMG.

It belongs to the UppP family.

It localises to the cell inner membrane. It carries out the reaction di-trans,octa-cis-undecaprenyl diphosphate + H2O = di-trans,octa-cis-undecaprenyl phosphate + phosphate + H(+). In terms of biological role, catalyzes the dephosphorylation of undecaprenyl diphosphate (UPP). Confers resistance to bacitracin. This chain is Undecaprenyl-diphosphatase, found in Chloroherpeton thalassium (strain ATCC 35110 / GB-78).